The following is a 205-amino-acid chain: Methylthioribulose-1-phosphate dehydratase (205 aa).

Zn(2+)-binding residues include H95 and H97.

Belongs to the aldolase class II family. MtnB subfamily. The cofactor is Zn(2+).

The enzyme catalyses 5-(methylsulfanyl)-D-ribulose 1-phosphate = 5-methylsulfanyl-2,3-dioxopentyl phosphate + H2O. The protein operates within amino-acid biosynthesis; L-methionine biosynthesis via salvage pathway; L-methionine from S-methyl-5-thio-alpha-D-ribose 1-phosphate: step 2/6. Catalyzes the dehydration of methylthioribulose-1-phosphate (MTRu-1-P) into 2,3-diketo-5-methylthiopentyl-1-phosphate (DK-MTP-1-P). This Microcystis aeruginosa (strain NIES-843 / IAM M-2473) protein is Methylthioribulose-1-phosphate dehydratase.